The following is a 132-amino-acid chain: Small ribosomal subunit protein uS11 (132 aa).

Belongs to the universal ribosomal protein uS11 family. Part of the 30S ribosomal subunit. Interacts with proteins S7 and S18. Binds to IF-3.

Functionally, located on the platform of the 30S subunit, it bridges several disparate RNA helices of the 16S rRNA. Forms part of the Shine-Dalgarno cleft in the 70S ribosome. In Clostridium botulinum (strain 657 / Type Ba4), this protein is Small ribosomal subunit protein uS11.